A 445-amino-acid chain; its full sequence is UPF0210 protein Sez_0396 (445 aa).

It belongs to the UPF0210 family. In terms of assembly, homodimer.

This Streptococcus equi subsp. zooepidemicus (strain MGCS10565) protein is UPF0210 protein Sez_0396.